The primary structure comprises 200 residues: Oligoribonuclease (200 aa).

Residues 20-183 (LVWLDMEMTG…ADIHESIDEL (164 aa)) enclose the Exonuclease domain. Tyr141 is an active-site residue.

This sequence belongs to the oligoribonuclease family.

It localises to the cytoplasm. Functionally, 3'-to-5' exoribonuclease specific for small oligoribonucleotides. The polypeptide is Oligoribonuclease (Burkholderia vietnamiensis (strain G4 / LMG 22486) (Burkholderia cepacia (strain R1808))).